A 112-amino-acid polypeptide reads, in one-letter code: uncharacterized protein (112 aa).

To M.jannaschii MJ1244 and M.thermoautotrophicum MTH1110.

This is an uncharacterized protein from Methanocaldococcus jannaschii (strain ATCC 43067 / DSM 2661 / JAL-1 / JCM 10045 / NBRC 100440) (Methanococcus jannaschii).